The following is a 508-amino-acid chain: UBX domain-containing protein 4 (508 aa).

An interaction with UBQLN1 region spans residues 1–200; sequence MLWFQGAIPA…PAEDLNIRVE (200 aa). Topologically, residues 1–413 are cytoplasmic; sequence MLWFQGAIPA…VHSSSGDIWT (413 aa). Composition is skewed to polar residues over residues 117 to 151 and 160 to 187; these read SETSVANGSQSESSVSTPSASFEPNNTCENSQSRN and TSDTKSDTATGGESAGHATSSQEPSGCS. The disordered stretch occupies residues 117–196; it reads SETSVANGSQ…SDQRPAEDLN (80 aa). The UBX domain occupies 315 to 393; the sequence is ERSTVARIQF…ELAPSASVVV (79 aa). The stretch at 414–434 is an intramembrane region; the sequence is LLGTVLYPFLAIWRLISNFLF. The Cytoplasmic segment spans residues 435 to 508; that stretch reads SNPPPTQTSV…TWNGNSTQQM (74 aa). A disordered region spans residues 440–508; it reads TQTSVRVTSS…TWNGNSTQQM (69 aa). Over residues 441–458 the composition is skewed to polar residues; that stretch reads QTSVRVTSSEPPNPASSS. Over residues 459–491 the composition is skewed to basic and acidic residues; the sequence is KSEKREPVRKRVLEKRGDDFKKEGKIYRLRTQD. The residue at position 489 (Thr489) is a Phosphothreonine. A compositionally biased stretch (polar residues) spans 498–508; sequence NTWNGNSTQQM.

As to quaternary structure, directly interacts with VCP. Interacts with UBQLN1. Forms a complex with VCP and UBQLN1.

Its subcellular location is the endoplasmic reticulum membrane. It localises to the nucleus envelope. Its function is as follows. Involved in endoplasmic reticulum-associated protein degradation (ERAD). Acts as a platform to recruit both UBQLN1 and VCP to the ER during ERAD. The sequence is that of UBX domain-containing protein 4 (UBXN4) from Pongo abelii (Sumatran orangutan).